Here is a 332-residue protein sequence, read N- to C-terminus: Fructose-bisphosphate aldolase (332 aa).

Ser56 serves as a coordination point for D-glyceraldehyde 3-phosphate. Asp93 acts as the Proton donor in catalysis. Residues His94, Asp115, Glu147, and His191 each contribute to the Zn(2+) site. Residue Gly192 coordinates dihydroxyacetone phosphate. Residue His234 participates in Zn(2+) binding. Residues 235 to 237 (GAS) and 277 to 280 (NIDS) contribute to the dihydroxyacetone phosphate site.

The protein belongs to the class II fructose-bisphosphate aldolase family. As to quaternary structure, homodimer. The cofactor is Zn(2+).

It carries out the reaction beta-D-fructose 1,6-bisphosphate = D-glyceraldehyde 3-phosphate + dihydroxyacetone phosphate. It functions in the pathway carbohydrate degradation; glycolysis; D-glyceraldehyde 3-phosphate and glycerone phosphate from D-glucose: step 4/4. In terms of biological role, catalyzes the aldol condensation of dihydroxyacetone phosphate (DHAP or glycerone-phosphate) with glyceraldehyde 3-phosphate (G3P) to form fructose 1,6-bisphosphate (FBP) in gluconeogenesis and the reverse reaction in glycolysis. This Treponema pallidum (strain Nichols) protein is Fructose-bisphosphate aldolase (fba).